The following is a 201-amino-acid chain: uncharacterized protein (201 aa).

The N-terminal stretch at 1–28 (MMTFKNLRYGLSSSVVLAASLFSVLSYA) is a signal peptide.

The protein belongs to the fimbrial protein family.

It localises to the fimbrium. In terms of biological role, part of the yadCKLM-htrE-yadVN fimbrial operon. Could contribute to adhesion to various surfaces in specific environmental niches. This is an uncharacterized protein from Escherichia coli (strain K12).